The following is a 52-amino-acid chain: uncharacterized protein (52 aa).

This is an uncharacterized protein from Bacillus subtilis (strain 168).